Consider the following 134-residue polypeptide: Cytochrome b (134 aa).

3 consecutive transmembrane segments (helical) span residues 33 to 53 (FGSL…FLAI), 77 to 98 (WLLR…YLHV), and 113 to 133 (WNIG…GYVL). Residues H83 and H97 each contribute to the heme b site.

Belongs to the cytochrome b family. As to quaternary structure, the cytochrome bc1 complex contains 11 subunits: 3 respiratory subunits (MT-CYB, CYC1 and UQCRFS1), 2 core proteins (UQCRC1 and UQCRC2) and 6 low-molecular weight proteins (UQCRH/QCR6, UQCRB/QCR7, UQCRQ/QCR8, UQCR10/QCR9, UQCR11/QCR10 and a cleavage product of UQCRFS1). This cytochrome bc1 complex then forms a dimer. The cofactor is heme b.

The protein resides in the mitochondrion inner membrane. Component of the ubiquinol-cytochrome c reductase complex (complex III or cytochrome b-c1 complex) that is part of the mitochondrial respiratory chain. The b-c1 complex mediates electron transfer from ubiquinol to cytochrome c. Contributes to the generation of a proton gradient across the mitochondrial membrane that is then used for ATP synthesis. This chain is Cytochrome b (MT-CYB), found in Platyrrhinus helleri (Heller's broad-nosed bat).